Here is a 61-residue protein sequence, read N- to C-terminus: Large ribosomal subunit protein bL28 (61 aa).

Belongs to the bacterial ribosomal protein bL28 family.

The chain is Large ribosomal subunit protein bL28 from Lachnospira eligens (strain ATCC 27750 / DSM 3376 / VPI C15-48 / C15-B4) (Eubacterium eligens).